The chain runs to 340 residues: Ketol-acid reductoisomerase (NADP(+)) (340 aa).

The KARI N-terminal Rossmann domain maps to 2-182 (AELYYDNQAD…GCTRAGVLRT (181 aa)). NADP(+) contacts are provided by residues 25–28 (FGSQ), Ser51, Ser53, and 83–86 (DIGQ). Residue His108 is part of the active site. Gly134 is an NADP(+) binding site. In terms of domain architecture, KARI C-terminal knotted spans 183-328 (TFAEETETDL…RELRRMMPFV (146 aa)). Asp191, Glu195, Glu227, and Glu231 together coordinate Mg(2+). Residue Ser252 coordinates substrate.

Belongs to the ketol-acid reductoisomerase family. It depends on Mg(2+) as a cofactor.

The enzyme catalyses (2R)-2,3-dihydroxy-3-methylbutanoate + NADP(+) = (2S)-2-acetolactate + NADPH + H(+). It catalyses the reaction (2R,3R)-2,3-dihydroxy-3-methylpentanoate + NADP(+) = (S)-2-ethyl-2-hydroxy-3-oxobutanoate + NADPH + H(+). It participates in amino-acid biosynthesis; L-isoleucine biosynthesis; L-isoleucine from 2-oxobutanoate: step 2/4. Its pathway is amino-acid biosynthesis; L-valine biosynthesis; L-valine from pyruvate: step 2/4. In terms of biological role, involved in the biosynthesis of branched-chain amino acids (BCAA). Catalyzes an alkyl-migration followed by a ketol-acid reduction of (S)-2-acetolactate (S2AL) to yield (R)-2,3-dihydroxy-isovalerate. In the isomerase reaction, S2AL is rearranged via a Mg-dependent methyl migration to produce 3-hydroxy-3-methyl-2-ketobutyrate (HMKB). In the reductase reaction, this 2-ketoacid undergoes a metal-dependent reduction by NADPH to yield (R)-2,3-dihydroxy-isovalerate. The chain is Ketol-acid reductoisomerase (NADP(+)) from Chloroflexus aurantiacus (strain ATCC 29366 / DSM 635 / J-10-fl).